The sequence spans 20 residues: Agglutinin beta-2 chain isoform 1 (20 aa).

The span at 1–10 shows a compositional bias: polar residues; it reads TQSTGTSQTI. The interval 1–20 is disordered; it reads TQSTGTSQTIAVGLWGGPDN.

Belongs to the jacalin lectin family. Tetramer of four alpha chains associated with two or four beta chains.

Functionally, alpha-methyl-D-mannoside and D-mannose specific lectin. Binds IgA. In Morus nigra (Black mulberry), this protein is Agglutinin beta-2 chain isoform 1.